Here is a 247-residue protein sequence, read N- to C-terminus: Putative cyclin-T1-1 (247 aa).

The protein belongs to the cyclin family. Cyclin T subfamily.

This is Putative cyclin-T1-1 (CYCT1-1) from Arabidopsis thaliana (Mouse-ear cress).